The primary structure comprises 703 residues: DNA ligase (703 aa).

Residues 1–20 form a disordered region; sequence MNDNLDLFSGAAPAAPESGA. Positions 9-20 are enriched in low complexity; it reads SGAAPAAPESGA. NAD(+) is bound by residues 53-57, 102-103, and Glu-139; these read DGEYD and SI. Residue Lys-141 is the N6-AMP-lysine intermediate of the active site. 4 residues coordinate NAD(+): Arg-162, Glu-200, Lys-321, and Lys-345. 4 residues coordinate Zn(2+): Cys-439, Cys-442, Cys-457, and Cys-463. A BRCT domain is found at 622-703; sequence QTAQPLAGMT…MLALLAGGDR (82 aa).

Belongs to the NAD-dependent DNA ligase family. LigA subfamily. Mg(2+) serves as cofactor. The cofactor is Mn(2+).

The enzyme catalyses NAD(+) + (deoxyribonucleotide)n-3'-hydroxyl + 5'-phospho-(deoxyribonucleotide)m = (deoxyribonucleotide)n+m + AMP + beta-nicotinamide D-nucleotide.. In terms of biological role, DNA ligase that catalyzes the formation of phosphodiester linkages between 5'-phosphoryl and 3'-hydroxyl groups in double-stranded DNA using NAD as a coenzyme and as the energy source for the reaction. It is essential for DNA replication and repair of damaged DNA. In Delftia acidovorans (strain DSM 14801 / SPH-1), this protein is DNA ligase.